We begin with the raw amino-acid sequence, 476 residues long: NADH-quinone oxidoreductase subunit N (476 aa).

Helical transmembrane passes span 4 to 24 (LLAL…MLTI), 32 to 52 (LTAT…VVAW), 67 to 87 (GLAV…ATLG), 100 to 117 (EYYL…ALVS), 121 to 141 (LAAL…MLAY), 155 to 175 (YMVL…LLYS), 198 to 218 (LMAG…IVPF), 230 to 250 (PAPA…LVLL), 263 to 283 (LHSL…LLAL), 291 to 311 (LLGY…VVND), 319 to 339 (ALYL…VTLL), 366 to 386 (AVLT…GFIG), 406 to 426 (VVAG…TLFL), and 447 to 467 (VVVL…APMI).

Belongs to the complex I subunit 2 family. As to quaternary structure, NDH-1 is composed of 14 different subunits. Subunits NuoA, H, J, K, L, M, N constitute the membrane sector of the complex.

Its subcellular location is the cell inner membrane. The enzyme catalyses a quinone + NADH + 5 H(+)(in) = a quinol + NAD(+) + 4 H(+)(out). NDH-1 shuttles electrons from NADH, via FMN and iron-sulfur (Fe-S) centers, to quinones in the respiratory chain. The immediate electron acceptor for the enzyme in this species is believed to be ubiquinone. Couples the redox reaction to proton translocation (for every two electrons transferred, four hydrogen ions are translocated across the cytoplasmic membrane), and thus conserves the redox energy in a proton gradient. This is NADH-quinone oxidoreductase subunit N from Chromohalobacter salexigens (strain ATCC BAA-138 / DSM 3043 / CIP 106854 / NCIMB 13768 / 1H11).